We begin with the raw amino-acid sequence, 77 residues long: Large ribosomal subunit protein bL28 (77 aa).

A disordered region spans residues Met-1–His-20.

Belongs to the bacterial ribosomal protein bL28 family.

The chain is Large ribosomal subunit protein bL28 from Pseudomonas fluorescens (strain Pf0-1).